The following is a 340-amino-acid chain: uncharacterized protein (340 aa).

The helical transmembrane segment at 6–26 (ITFGLLVLMVCVILFVLYVQL) threads the bilayer.

The protein localises to the cell membrane. This is an uncharacterized protein from Bacillus subtilis (strain 168).